Here is a 102-residue protein sequence, read N- to C-terminus: Small ribosomal subunit protein uS10 (102 aa).

It belongs to the universal ribosomal protein uS10 family. As to quaternary structure, part of the 30S ribosomal subunit.

In terms of biological role, involved in the binding of tRNA to the ribosomes. The sequence is that of Small ribosomal subunit protein uS10 from Brevibacillus brevis (strain 47 / JCM 6285 / NBRC 100599).